The primary structure comprises 216 residues: ATP phosphoribosyltransferase (216 aa).

This sequence belongs to the ATP phosphoribosyltransferase family. Short subfamily. Heteromultimer composed of HisG and HisZ subunits.

It is found in the cytoplasm. The catalysed reaction is 1-(5-phospho-beta-D-ribosyl)-ATP + diphosphate = 5-phospho-alpha-D-ribose 1-diphosphate + ATP. It participates in amino-acid biosynthesis; L-histidine biosynthesis; L-histidine from 5-phospho-alpha-D-ribose 1-diphosphate: step 1/9. Catalyzes the condensation of ATP and 5-phosphoribose 1-diphosphate to form N'-(5'-phosphoribosyl)-ATP (PR-ATP). Has a crucial role in the pathway because the rate of histidine biosynthesis seems to be controlled primarily by regulation of HisG enzymatic activity. This is ATP phosphoribosyltransferase from Acidovorax ebreus (strain TPSY) (Diaphorobacter sp. (strain TPSY)).